Here is a 114-residue protein sequence, read N- to C-terminus: Protein D2 (114 aa).

The protein belongs to the phosphatidylethanolamine-binding protein family.

This is Protein D2 (D2) from Onchocerca volvulus.